The chain runs to 801 residues: Elongation factor G, mitochondrial (801 aa).

The transit peptide at 1 to 24 directs the protein to the mitochondrion; the sequence is MRCPSLARLPHRAISGLTRLPVRL. The region spanning 99 to 386 is the tr-type G domain; it reads SRIRNIGIAA…GVIDYLPNPS (288 aa). GTP contacts are provided by residues 108–115, 184–188, and 238–241; these read AHIDSGKT, DTPGH, and NKMD.

Belongs to the TRAFAC class translation factor GTPase superfamily. Classic translation factor GTPase family. EF-G/EF-2 subfamily.

Its subcellular location is the mitochondrion. Its pathway is protein biosynthesis; polypeptide chain elongation. Functionally, mitochondrial GTPase that catalyzes the GTP-dependent ribosomal translocation step during translation elongation. During this step, the ribosome changes from the pre-translocational (PRE) to the post-translocational (POST) state as the newly formed A-site-bound peptidyl-tRNA and P-site-bound deacylated tRNA move to the P and E sites, respectively. Catalyzes the coordinated movement of the two tRNA molecules, the mRNA and conformational changes in the ribosome. The sequence is that of Elongation factor G, mitochondrial (mef1) from Aspergillus clavatus (strain ATCC 1007 / CBS 513.65 / DSM 816 / NCTC 3887 / NRRL 1 / QM 1276 / 107).